The following is a 277-amino-acid chain: Large ribosomal subunit protein uL2 (277 aa).

Residues 215–277 (GIRPTVRGSV…KLIVKRRNDK (63 aa)) form a disordered region. Residues 264–277 (KYSDKLIVKRRNDK) show a composition bias toward basic and acidic residues.

This sequence belongs to the universal ribosomal protein uL2 family. In terms of assembly, part of the 50S ribosomal subunit. Forms a bridge to the 30S subunit in the 70S ribosome.

In terms of biological role, one of the primary rRNA binding proteins. Required for association of the 30S and 50S subunits to form the 70S ribosome, for tRNA binding and peptide bond formation. It has been suggested to have peptidyltransferase activity; this is somewhat controversial. Makes several contacts with the 16S rRNA in the 70S ribosome. This chain is Large ribosomal subunit protein uL2, found in Clostridium acetobutylicum (strain ATCC 824 / DSM 792 / JCM 1419 / IAM 19013 / LMG 5710 / NBRC 13948 / NRRL B-527 / VKM B-1787 / 2291 / W).